Here is a 95-residue protein sequence, read N- to C-terminus: uncharacterized protein (95 aa).

This is an uncharacterized protein from Vaccinia virus (strain Copenhagen) (VACV).